Here is a 962-residue protein sequence, read N- to C-terminus: Translation initiation factor IF-2 (962 aa).

The segment covering 52-77 (RSHGQADDSSRKKITLTKRETSEIRQ) has biased composition (basic and acidic residues). Disordered regions lie at residues 52 to 87 (RSHG…TRTV) and 121 to 378 (AVEE…EPVV). A compositionally biased stretch (polar residues) spans 78–87 (SDGTGKTRTV). Basic and acidic residues-rich tracts occupy residues 123-183 (EEAR…KAEE), 197-250 (DSSR…EAEA), and 267-278 (PSERKAEEKKAE). Residues 342-355 (TSGGVGGWRGGPRG) are compositionally biased toward gly residues. The tr-type G domain maps to 462 to 631 (PRPPVVTVMG…LLQAEVLELT (170 aa)). Residues 471–478 (GHVDHGKT) are G1. Residue 471–478 (GHVDHGKT) participates in GTP binding. The tract at residues 496-500 (GITQH) is G2. The tract at residues 517-520 (DTPG) is G3. Residues 517–521 (DTPGH) and 571–574 (NKID) contribute to the GTP site. Residues 571 to 574 (NKID) form a G4 region. The G5 stretch occupies residues 607-609 (SAK).

The protein belongs to the TRAFAC class translation factor GTPase superfamily. Classic translation factor GTPase family. IF-2 subfamily.

The protein resides in the cytoplasm. In terms of biological role, one of the essential components for the initiation of protein synthesis. Protects formylmethionyl-tRNA from spontaneous hydrolysis and promotes its binding to the 30S ribosomal subunits. Also involved in the hydrolysis of GTP during the formation of the 70S ribosomal complex. This is Translation initiation factor IF-2 from Cupriavidus necator (strain ATCC 17699 / DSM 428 / KCTC 22496 / NCIMB 10442 / H16 / Stanier 337) (Ralstonia eutropha).